The primary structure comprises 423 residues: COP9 signalosome complex subunit 3 (423 aa).

Alanine 2 carries the post-translational modification N-acetylalanine. The PCI domain occupies 197–365; sequence NFERALYFYE…GMVSFHDNPE (169 aa). The interval 402 to 423 is disordered; the sequence is QFVQKSMGSQEDDSGNKPSSYS. Phosphoserine occurs at positions 407, 410, and 423.

This sequence belongs to the CSN3 family. As to quaternary structure, component of the CSN complex, composed of COPS1/GPS1, COPS2, COPS3, COPS4, COPS5, COPS6, COPS7 (COPS7A or COPS7B), COPS8 and COPS9 isoform 1. In the complex, it probably interacts directly with COPS1, COPS4, COPS8 and COPS9 isoform 1. Interacts with CK2 and PKD. Interacts with the translation initiation factor EIF3S6 and IKBKG. Interacts with ERCC6. As to expression, widely expressed. Expressed at high level in heart and skeletal muscle.

The protein resides in the cytoplasm. The protein localises to the nucleus. Its function is as follows. Component of the COP9 signalosome complex (CSN), a complex involved in various cellular and developmental processes. The CSN complex is an essential regulator of the ubiquitin (Ubl) conjugation pathway by mediating the deneddylation of the cullin subunits of SCF-type E3 ligase complexes, leading to decrease the Ubl ligase activity of SCF-type complexes such as SCF, CSA or DDB2. The complex is also involved in phosphorylation of p53/TP53, c-jun/JUN, IkappaBalpha/NFKBIA, ITPK1 and IRF8/ICSBP, possibly via its association with CK2 and PKD kinases. CSN-dependent phosphorylation of TP53 and JUN promotes and protects degradation by the Ubl system, respectively. This Homo sapiens (Human) protein is COP9 signalosome complex subunit 3 (COPS3).